The chain runs to 302 residues: Galactofuranosyltransferase GlfT1 (302 aa).

It belongs to the glycosyltransferase 2 family.

It is found in the cell membrane. The protein resides in the secreted. Its subcellular location is the cell wall. It catalyses the reaction alpha-L-rhamnosyl-(1-&gt;3)-N-acetyl-alpha-D-glucosaminyl-diphospho-trans,octa-cis-decaprenol + 2 UDP-alpha-D-galactofuranose = beta-D-galactofuranosyl-(1-&gt;5)-beta-D-galactofuranosyl-(1-&gt;4)-alpha-L-rhamnosyl-(1-&gt;3)-N-acetyl-alpha-D-glucosaminyl-diphospho-trans,octa-cis-decaprenol + 2 UDP + 2 H(+). The protein operates within cell wall biogenesis; cell wall polysaccharide biosynthesis. Functionally, involved in the biosynthesis of the arabinogalactan (AG) region of the mycolylarabinogalactan-peptidoglycan (mAGP) complex, an essential component of the mycobacterial cell wall. Catalyzes the transfer of the first two galactofuranosyl (Galf) units from UDP-galactofuranose (UDP-Galf) onto the rhamnosyl-GlcNAc-diphospho-decaprenol (Rha-GlcNAc-PP-C50) acceptor, yielding galactofuranosyl-galactofuranosyl-rhamnosyl-GlcNAc-diphospho-decaprenol (Galf-Galf-Rha-GlcNAc-PP-C50). Thus, GlfT1 is the initiator of galactan synthesis, while GlfT2 continues with the subsequent polymerization events. This chain is Galactofuranosyltransferase GlfT1, found in Mycolicibacterium smegmatis (strain ATCC 700084 / mc(2)155) (Mycobacterium smegmatis).